The chain runs to 66 residues: Photosystem II reaction center protein J (66 aa).

Residues 36–56 (LWLVATAGGIAVIFVLGIFFY) form a helical membrane-spanning segment.

Belongs to the PsbJ family. PSII is composed of 1 copy each of membrane proteins PsbA, PsbB, PsbC, PsbD, PsbE, PsbF, PsbH, PsbI, PsbJ, PsbK, PsbL, PsbM, PsbT, PsbX, PsbY, Psb30/Ycf12, peripheral proteins PsbO, CyanoQ (PsbQ), PsbU, PsbV and a large number of cofactors. It forms dimeric complexes.

Its subcellular location is the cellular thylakoid membrane. One of the components of the core complex of photosystem II (PSII). PSII is a light-driven water:plastoquinone oxidoreductase that uses light energy to abstract electrons from H(2)O, generating O(2) and a proton gradient subsequently used for ATP formation. It consists of a core antenna complex that captures photons, and an electron transfer chain that converts photonic excitation into a charge separation. In Prochlorococcus marinus (strain MIT 9215), this protein is Photosystem II reaction center protein J.